The chain runs to 410 residues: WD repeat-containing protein jip5 (410 aa).

6 WD repeats span residues 9 to 48 (PLSADLFAQAIHPSEPIISVGLSTGHVQTFRLPTEEEEEH), 74 to 113 (RHKGSCRTLTFGIDGEMLYSAGTDGLVKAAKAETGVVENK), 119 to 160 (AKDG…SKVA), 223 to 264 (VSST…DQDE), 273 to 316 (GGGE…VVSE), and 320 to 357 (DETEGVIGLGFDVEGHMVSGGGQIVKVWHEAADSIGGE). Positions 41-65 (PTEEEEEHSDDEQASVSSSRNGKGH) are disordered. Positions 43-53 (EEEEEHSDDEQ) are enriched in acidic residues. The tract at residues 354-410 (IGGEKRGFGGDSDDSDDDSDDSDHEPKQGDDSRRKRKKQKGKDRGKGPEIMAFADLD) is disordered. The segment covering 364–376 (DSDDSDDDSDDSD) has biased composition (acidic residues). Over residues 377 to 386 (HEPKQGDDSR) the composition is skewed to basic and acidic residues.

It belongs to the WD repeat WDR55 family.

It is found in the nucleus. Its subcellular location is the nucleolus. This Emericella nidulans (strain FGSC A4 / ATCC 38163 / CBS 112.46 / NRRL 194 / M139) (Aspergillus nidulans) protein is WD repeat-containing protein jip5 (jip5).